The primary structure comprises 7124 residues: Replicase polyprotein 1ab (7124 aa).

The interval 25 to 45 (SEKLGSPERSEEDGFCPSAAQ) is disordered. The CoV Nsp1 globular domain occupies 54 to 196 (LINHVRVDCS…PWSILLRKGG (143 aa)). Positions 217 to 247 (FNVEDACEEVHLNPKGKYSRKAYALLKGYRG) constitute a BetaCoV Nsp1 C-terminal domain. In terms of domain architecture, CoV Nsp2 N-terminal spans 251-511 (ILFLDQYGCD…TDAICRSLYM (261 aa)). Zn(2+) is bound by residues C390, C395, C411, and C414. Positions 390–414 (CCGDACDFRGWVPGNMMDGFLCPGC) are C4. Residues 518-706 (CGNLEQRAIL…VDKFKVFFKV (189 aa)) form the CoV Nsp2 middle domain. In terms of domain architecture, CoV Nsp2 C-terminal spans 726-832 (SNRVCLAGCK…LDQCWRFPCA (107 aa)). The region spanning 834 to 946 (KKVEFNDKPK…MYCSFSAPDD (113 aa)) is the Ubiquitin-like 1 domain. The Peptidase C16 1 domain occupies 1031-1268 (AFDAIYSEAL…IAQLYGSCIT (238 aa)). C1068 serves as the catalytic For PL1-PRO activity. The Zn(2+) site is built by C1145, C1148, C1171, and C1173. A C4-type 1 zinc finger spans residues 1145–1173 (CLKCDMDLKLQGLDAMFFYGDVVSHVCKC). Active-site for PL1-PRO activity residues include H1219 and D1230. The 161-residue stretch at 1269–1429 (PNVCFVKGDV…VIEKCQVTSI (161 aa)) folds into the Macro domain. The 73-residue stretch at 1484–1556 (DDARVFVQAH…VSQIRALLAN (73 aa)) folds into the DPUP domain. A Ubiquitin-like 2 domain is found at 1555–1610 (ANKVDVLCTVDGVNFRSCCVAEGEVFGKTLGSVFCDGINVTKVRCSAIHKGKVFFQ). Positions 1625 to 1884 (AFGFDEPQLL…CVEYNPDLSQ (260 aa)) constitute a Peptidase C16 2 domain. C1663 acts as the For PL2-PRO activity in catalysis. The Zn(2+) site is built by C1741, C1743, C1775, and C1777. The C4-type 2 zinc-finger motif lies at 1741–1777 (CKCGVKQEQRKGVDAVMHFGTLDKGDLAKGYTIACTC). Catalysis depends on for PL2-PRO activity residues H1820 and D1834. The Nucleic acid-binding domain maps to 1898–1999 (IKAQFRTFEK…TYFNRPSVVC (102 aa)). A G2M domain is found at 2053-2202 (QVVSGFLSDL…TDNKVIYTTE (150 aa)). The next 2 helical transmembrane spans lie at 2232-2252 (FFLV…NVIL) and 2260-2280 (IGFF…TFGI). An HD1 region spans residues 2232-2408 (FFLVATVFLL…FTLLRFYIVV (177 aa)). In terms of domain architecture, 3Ecto spans 2268–2329 (GQIVAWVKTT…AINVVQHVVD (62 aa)). 2 cysteine pairs are disulfide-bonded: C2284–C2308 and C2299–C2305. 2 helical membrane passes run 2346-2366 (LVIG…LIGM) and 2388-2408 (FFVF…YIVV). The segment at 2416–2506 (CLCRHVMYGC…ELKRPVNPTD (91 aa)) is Y1. The CoV Nsp3 Y domain occupies 2416–2783 (CLCRHVMYGC…LTTPFSLKGG (368 aa)). The Zn(2+) site is built by H2420, C2425, C2430, C2433, C2466, H2469, C2473, and C2476. The segment at 2420–2433 (HVMYGCSRPGCLFC) is ZF1. The tract at residues 2466 to 2476 (CAKHQWNCLNC) is ZF2. The interval 2507–2599 (SAYYLVTEVK…LVEKKLITTA (93 aa)) is Y2. The coV-Y stretch occupies residues 2507 to 2783 (SAYYLVTEVK…LTTPFSLKGG (277 aa)). The tract at residues 2600–2682 (NTGLSVSQTM…KSIMSAVNAG (83 aa)) is Y3. Positions 2683 to 2783 (VDFTDESCNN…LTTPFSLKGG (101 aa)) are Y4. 7 helical membrane-spanning segments follow: residues 2789 to 2809 (VLQW…ALMP), 2869 to 2889 (ACPV…FNVP), 3042 to 3062 (AFDL…FFAL), 3064 to 3084 (ASSV…YYLI), 3096 to 3116 (VVVI…VFQV), 3123 to 3143 (LYAC…SVVM), and 3148 to 3168 (LVMY…AVVV). The interval 2789 to 3168 (VLQWLFVVNL…FCIIYVAVVV (380 aa)) is HD2. The Nsp4C domain maps to 3182-3279 (LGTEVRSDGT…TASVTTSFLQ (98 aa)). One can recognise a Peptidase C30 domain in the interval 3280–3582 (SGIVKMVFPT…YQQLAGVKLQ (303 aa)). Residues H3320 and C3424 each act as for 3CL-PRO activity in the active site. Positions 3525–3808 (LVLDALASMT…VCCCYWGVLS (284 aa)) are HD3. Helical transmembrane passes span 3591 to 3611 (GTCC…SAFV), 3621 to 3641 (THML…MLLV), 3647 to 3667 (YLTM…YLVV), 3690 to 3710 (TYMD…FVTM), 3717 to 3737 (VFSV…WYFG), 3744 to 3764 (VLLF…LSLA), and 3788 to 3808 (LVLL…GVLS). The 89-residue stretch at 3870–3958 (SRLTDVKCVN…DYVRDSTVLQ (89 aa)) folds into the RdRp Nsp7 cofactor domain. In terms of domain architecture, RdRp Nsp8 cofactor spans 3959–4155 (ALQSEFVNMA…HNEVSSVVLQ (197 aa)). One can recognise a Nsp9 ssRNA-binding domain in the interval 4156-4265 (NNELMPQKLR…GTLSSTVRLQ (110 aa)). One can recognise an ExoN/MTase coactivator domain in the interval 4266–4403 (AGTATEYASN…CVGTGSQFQS (138 aa)). Positions 4339, 4342, 4348, 4355, 4381, 4384, 4392, and 4394 each coordinate Zn(2+). Zinc fingers lie at residues 4339-4355 (CIYC…DGLC) and 4381-4394 (CQVC…SCSC). The 256-residue stretch at 4408-4663 (FLNRVRGTSV…DSELFINGTY (256 aa)) folds into the NiRAN domain. 2 residues coordinate Mn(2+): N4611 and D4620. One can recognise a Nsp12 Interface domain in the interval 4664-4762 (REFDLVQYDF…MNMDVDTHRY (99 aa)). Zn(2+) is bound by residues H4693, C4699, C4704, C4708, and C4885. A Nsp12 RNA-dependent RNA polymerase domain is found at 4763-5330 (RLSLKDLLLY…NMYLRSAVMQ (568 aa)). Positions 4765-4979 (SLKDLLLYAA…HQKCLKSIAA (215 aa)) are rdRp Fingers N-ter. Residues 4980-5018 (TRGVPVVIGTTKFYGGWDDMLRRLIKDVDSPVLMGWDYP) form a rdRp Palm N-ter region. Residues 5010-5172 (PVLMGWDYPK…CYNSEFASKG (163 aa)) form the RdRp catalytic domain. Residues 5019–5077 (KCDRAMPNILRIISSLVLARKHDSCCSHTDRFYRLANECAQVLSEIVMCGGCYYVKPGG) are rdRp Fingers C-ter. 3 residues coordinate Zn(2+): H5040, C5043, and C5044. Residues 5078–5213 (TSSGDATTAF…EKGPHEFCSQ (136 aa)) are rdRp Palm C-ter. Active-site residues include S5157, D5158, and D5159. The segment at 5214–5330 (HTMLVKMDGD…NMYLRSAVMQ (117 aa)) is rdRp Thumb. The CV ZBD domain maps to 5331–5443 (SVGACVVCSS…EDFNKIASCK (113 aa)). Zn(2+)-binding residues include C5335, C5338, C5346, C5349, C5356, C5359, H5363, H5369, C5380, C5385, C5402, and H5405. Positions 5586-5767 (SVPETFQNNV…MCCLGPDIFL (182 aa)) constitute a (+)RNA virus helicase ATP-binding domain. 5611-5618 (GPPGTGKS) is a binding site for ATP. Residues 5768 to 5937 (GTCYRCPKEI…RLQCTTNLFK (170 aa)) enclose the (+)RNA virus helicase C-terminal domain. Residues 6001 to 6216 (LFITRDEAIR…RCLAVHDCFC (216 aa)) form the ExoN domain. Active-site residues include D6019, E6021, and E6120. Zn(2+) is bound by residues C6136, C6139, C6155, H6158, H6186, C6190, and H6193. Active-site residues include H6197 and D6202. Residue C6208 participates in Zn(2+) binding. The 227-residue stretch at 6225–6451 (YPIISNEVSV…NLWNTFTRLQ (227 aa)) folds into the N7-MTase domain. S-adenosyl-L-methionine is bound at residue 6260–6266 (DIGNPKG). The gpppA-binding stretch occupies residues 6338 to 6352 (CNGGSLYVNKHAFHT). 4 residues coordinate Zn(2+): C6376, C6397, C6408, and H6411. Positions 6452–6512 (SLENVVYNLV…NVAVELFAKR (61 aa)) constitute a Nsp15 N-terminal oligomerization domain. Residues 6513 to 6633 (SIRPHPELKL…FAMRRDGDDV (121 aa)) form the AV-Nsp11N/CoV-Nsp15M domain. A NendoU domain is found at 6683–6822 (APRSEMEKDF…NEEKVMTFYP (140 aa)). Catalysis depends on residues H6713, H6728, K6768, K6871, D6955, K6995, and E7028. A Nidovirus-type SAM-dependent 2'-O-MTase domain is found at 6827–7121 (AADWKPGYVM…KEVFVGDSLV (295 aa)).

The protein belongs to the coronaviruses polyprotein 1ab family. In terms of assembly, interacts with host PHB and PHB2. As to quaternary structure, interacts with papain-like protease nsp3 and non-structural protein 6. Monomer. Homodimer. Only the homodimer shows catalytic activity. In terms of assembly, interacts with nsp8 and nsp12 to form the replication-transcription complex (RTC): nsp12, nsp7, two subunits of nsp8, and up to two subunits of nsp13. As to quaternary structure, interacts with nsp7, nsp13 and nsp12 to form the replication-transcription complex (RTC): nsp12, nsp7, two subunits of nsp8, and up to two subunits of nsp13. Interacts with nsp12. In terms of assembly, interacts with proofreading exoribonuclease nsp14 and 2'-O-methyltransferase nsp16; these interactions enhance nsp14 and nsp16 enzymatic activities. As to quaternary structure, interacts with nsp7 and nsp8 to form the replication-transcription complex (RTC): nsp12, nsp7, two subunits of nsp8, and up to two subunits of nsp13. Interacts with nsp9. Interacts with nsp8 to form the replication-transcription complex (RTC): nsp12, nsp7, two subunits of nsp8, and up to two subunits of nsp13. Mn(2+) is required as a cofactor. Mg(2+) serves as cofactor. Post-translationally, specific enzymatic cleavages in vivo by its own proteases yield mature proteins. 3CL-PRO and PL-PRO proteinases are autocatalytically processed.

It is found in the host membrane. The protein resides in the host cytoplasm. Its subcellular location is the host perinuclear region. It localises to the host endoplasmic reticulum-Golgi intermediate compartment. It carries out the reaction RNA(n) + a ribonucleoside 5'-triphosphate = RNA(n+1) + diphosphate. It catalyses the reaction ATP + H2O = ADP + phosphate + H(+). The catalysed reaction is Thiol-dependent hydrolysis of ester, thioester, amide, peptide and isopeptide bonds formed by the C-terminal Gly of ubiquitin (a 76-residue protein attached to proteins as an intracellular targeting signal).. The enzyme catalyses a 5'-end (N(7)-methyl 5'-triphosphoguanosine)-ribonucleoside in mRNA + S-adenosyl-L-methionine = a 5'-end (N(7)-methyl 5'-triphosphoguanosine)-(2'-O-methyl-ribonucleoside) in mRNA + S-adenosyl-L-homocysteine + H(+). It carries out the reaction uridylyl-uridylyl-ribonucleotide-RNA = a 3'-end uridylyl-2',3'-cyclophospho-uridine-RNA + a 5'-end dephospho-ribonucleoside-RNA. It catalyses the reaction a 5'-end diphospho-ribonucleoside in mRNA + GTP + H(+) = a 5'-end (5'-triphosphoguanosine)-ribonucleoside in mRNA + diphosphate. The catalysed reaction is a 5'-end (5'-triphosphoguanosine)-ribonucleoside in mRNA + S-adenosyl-L-methionine = a 5'-end (N(7)-methyl 5'-triphosphoguanosine)-ribonucleoside in mRNA + S-adenosyl-L-homocysteine. Its function is as follows. The replicase polyprotein of coronaviruses is a multifunctional protein: it contains the activities necessary for the transcription of negative stranded RNA, leader RNA, subgenomic mRNAs and progeny virion RNA as well as proteinases responsible for the cleavage of the polyprotein into functional products. In terms of biological role, inhibits host translation by interacting with the 40S ribosomal subunit. The nsp1-40S ribosome complex further induces an endonucleolytic cleavage near the 5'UTR of host mRNAs, targeting them for degradation. Viral mRNAs are not susceptible to nsp1-mediated endonucleolytic RNA cleavage thanks to the presence of a 5'-end leader sequence and are therefore protected from degradation. By suppressing host gene expression, nsp1 facilitates efficient viral gene expression in infected cells and evasion from host immune response. Functionally, may play a role in the modulation of host cell survival signaling pathway by interacting with host PHB and PHB2. Indeed, these two proteins play a role in maintaining the functional integrity of the mitochondria and protecting cells from various stresses. Responsible for the cleavages located at the N-terminus of the replicase polyprotein. In addition, PL-PRO possesses a deubiquitinating/deISGylating activity and processes both 'Lys-48'- and 'Lys-63'-linked polyubiquitin chains from cellular substrates. Participates together with nsp4 in the assembly of virally-induced cytoplasmic double-membrane vesicles necessary for viral replication. Antagonizes innate immune induction of type I interferon by blocking the phosphorylation, dimerization and subsequent nuclear translocation of host IRF3. Also prevents host NF-kappa-B signaling. Its function is as follows. Participates in the assembly of virally-induced cytoplasmic double-membrane vesicles necessary for viral replication. In terms of biological role, cleaves the C-terminus of replicase polyprotein at 11 sites. Recognizes substrates containing the core sequence [ILMVF]-Q-|-[SGACN]. Also able to bind an ADP-ribose-1''-phosphate (ADRP). Functionally, plays a role in the initial induction of autophagosomes from host endoplasmic reticulum. Later, limits the expansion of these phagosomes that are no longer able to deliver viral components to lysosomes. Forms a hexadecamer with nsp8 (8 subunits of each) that may participate in viral replication by acting as a primase. Alternatively, may synthesize substantially longer products than oligonucleotide primers. Its function is as follows. Forms a hexadecamer with nsp7 (8 subunits of each) that may participate in viral replication by acting as a primase. Alternatively, may synthesize substantially longer products than oligonucleotide primers. In terms of biological role, forms a primer, NSP9-pU, which is utilized by the polymerase for the initiation of RNA chains. Interacts with ribosome signal recognition particle RNA (SRP). Together with NSP8, suppress protein integration into the cell membrane, thereby disrupting host immune defenses. Functionally, plays a pivotal role in viral transcription by stimulating both nsp14 3'-5' exoribonuclease and nsp16 2'-O-methyltransferase activities. Therefore plays an essential role in viral mRNAs cap methylation. RNA-directed RNA polymerase that catalyzes the transcription of viral genomic and subgenomic RNAs. Acts in complex with nsp7 and nsp8 to transcribe both the minus and positive strands of genomic RNA. The kinase-like NiRAN domain of NSP12 attaches one or more nucleotides to the amino terminus of NSP9, forming a covalent RNA-protein intermediate that serves as transcription/replication primer. Subgenomic RNAs (sgRNAs) are formed by discontinuous transcription: The polymerase has the ability to pause at transcription-regulating sequences (TRS) and jump to the leader TRS, resulting in a major deletion. This creates a series of subgenomic RNAs that are replicated, transcribed and translated. In addition, Nsp12 is a subunit of the viral RNA capping enzyme that catalyzes the RNA guanylyltransferase reaction for genomic and sub-genomic RNAs. Subsequently, the NiRAN domain transfers RNA to GDP, and forms the core cap structure GpppA-RNA. Its function is as follows. Multi-functional protein with a zinc-binding domain in N-terminus displaying RNA and DNA duplex-unwinding activities with 5' to 3' polarity. Activity of helicase is dependent on magnesium. In terms of biological role, plays a role in viral RNA synthesis through two distinct activities. The N7-guanine methyltransferase activity plays a role in the formation of the cap structure GpppA-RNA. The proofreading exoribonuclease reduces the sensitivity of the virus to RNA mutagens during replication. This activity acts on both ssRNA and dsRNA in a 3'-5' direction. Functionally, plays a role in viral transcription/replication and prevents the simultaneous activation of host cell dsRNA sensors, such as MDA5/IFIH1, OAS, and PKR. Acts by degrading the 5'-polyuridines generated during replication of the poly(A) region of viral genomic and subgenomic RNAs. Catalyzes a two-step reaction in which a 2'3'-cyclic phosphate (2'3'-cP) is first generated by 2'-O transesterification, which is then hydrolyzed to a 3'-phosphate (3'-P). If not degraded, poly(U) RNA would hybridize with poly(A) RNA tails and activate host dsRNA sensors. Methyltransferase that mediates mRNA cap 2'-O-ribose methylation to the 5'-cap structure of viral mRNAs. N7-methyl guanosine cap is a prerequisite for binding of nsp16. Therefore plays an essential role in viral mRNAs cap methylation which is essential to evade immune system. The sequence is that of Replicase polyprotein 1ab (rep) from Murine coronavirus (strain 2) (MHV-2).